Consider the following 518-residue polypeptide: MGQVIGFFQSLPNIINEALNIALICVALIAILKGIVNIWKSGLIQLFIFLILAGRSCSHTFQIGRNHEFQSITLNFTQFLGYAPSSCSVNNTHHYFRGPGNVSWGIELTLTNNSVINASNSLKVFTNIHHNITNCVQNIDEQDHLMKWLIETMHLQIMKPGKRLPPILCEKDKGLLIEYNLTNIASREEKHSEYWSQLLYGLSKLLGSSKSLWFDYCQRADCMMQEHSSHLKCNYSECSGHTTFKYLILQNTTWENHCEFNHLNTIHLLMSSTGQSFITRRLQAFLTWTLSDATGNDLPGGYCLEQWAIVWAGIKCFGNTAVAKCNQNHDSEFCDMLRLFDYNRNAIKSLNDQSQSRLNLLTNTINSLISDNLLMKNKLAEIMNIPYCNYTKFWYINDTRTGRHTLPQCWLISNGSYLNETKFRTQWLSESNALYTEMLTEDYDKRQGSTPLSLVDLCFWSTLFYVTTLFAHLVGFPTHRHILDGPCPKPHRLTKKGICSCGHFGIPGKPVRWVKRSR.

Residue Gly-2 is the site of N-myristoyl glycine; by host attachment. Topologically, residues 2–17 (GQVIGFFQSLPNIINE) are extracellular. The chain crosses the membrane as a helical span at residues 18–33 (ALNIALICVALIAILK). The Cytoplasmic portion of the chain corresponds to 34–58 (GIVNIWKSGLIQLFIFLILAGRSCS). Cys-57 contributes to the Zn(2+) binding site. At 59–456 (HTFQIGRNHE…QGSTPLSLVD (398 aa)) the chain is on the extracellular side. Cystine bridges form between Cys-87–Cys-258, Cys-303–Cys-316, Cys-325–Cys-334, and Cys-388–Cys-409. Asn-90, Asn-112, Asn-127, Asn-180, and Asn-251 each carry an N-linked (GlcNAc...) asparagine; by host glycan. N-linked (GlcNAc...) asparagine; by host glycans are attached at residues Asn-389, Asn-397, Asn-414, and Asn-419. The chain crosses the membrane as a helical span at residues 457-477 (LCFWSTLFYVTTLFAHLVGFP). Residues 478-518 (THRHILDGPCPKPHRLTKKGICSCGHFGIPGKPVRWVKRSR) lie on the Cytoplasmic side of the membrane. Zn(2+) contacts are provided by His-479, His-481, Cys-487, His-491, Cys-499, and Cys-501.

Belongs to the arenaviridae GPC protein family. In terms of assembly, interacts with glycoprotein G2. Part of the GP complex (GP-C) together with glycoprotein G1 and glycoprotein G2. The GP-complex interacts with protein Z, which interacts with ribonucleocapsid; these interactions may induce virion budding. As to quaternary structure, homotrimer; disulfide-linked. In pre-fusion state, G1 homotrimers bind G2 homotrimers via ionic interactions. Part of the GP complex (GP-C) together with glycoprotein G2 and the stable signal peptide. The GP-complex interacts with protein Z, which interacts with ribonucleocapsid; these interactions may induce virion budding. Homotrimer. Interacts with the stable signal peptide. In pre-fusion state, G2 homotrimers bind G1 homotrimers via ionic interactions. Part of the GP complex (GP-C) together with glycoprotein G1 and the stable signal peptide. Acidification in the endosome triggers rearrangements, which ultimately leads to a 6 helix bundle formed by the two heptad repeat domains (HR1 and HR2) in post-fusion state. The GP-complex interacts with protein Z, which interacts with ribonucleocapsid; these interactions may induce virion budding. In terms of processing, specific enzymatic cleavages in vivo yield mature proteins. GP-C polyprotein is cleaved in the endoplasmic reticulum by the host protease MBTPS1. Only cleaved glycoprotein is incorporated into virions. Post-translationally, the SSP remains stably associated with the GP complex following cleavage by signal peptidase and plays crucial roles in the trafficking of GP through the secretory pathway. Myristoylation is necessary for GP2-mediated fusion activity.

It localises to the virion membrane. It is found in the host endoplasmic reticulum membrane. Its subcellular location is the host Golgi apparatus membrane. The protein resides in the host cell membrane. Functions as a cleaved signal peptide that is retained as the third component of the GP complex (GP-C). Helps to stabilize the spike complex in its native conformation. The SSP is required for efficient glycoprotein expression, post-translational maturation cleavage of G1 and G2, glycoprotein transport to the cell surface plasma membrane, formation of infectious virus particles, and acid pH-dependent glycoprotein-mediated cell fusion. In terms of biological role, forms the virion spikes together with glycoprotein G2. The glycoprotein spike trimers are connected to the underlying matrix. Mediates virus attachment to host receptor alpha-dystroglycan DAG1. This attachment induces virion internalization predominantly through clathrin- and caveolin-independent endocytosis. Its function is as follows. Forms the virion spikes together with glycoprotein G1. The glycoprotein spike trimers are connected to the underlying matrix. Class I viral fusion protein that directs fusion of viral and host endosomal membranes, leading to delivery of the nucleocapsid into the cytoplasm. Membrane fusion is mediated by irreversible conformational changes induced by acidification. The sequence is that of Pre-glycoprotein polyprotein GP complex from Bolomys (OLVV).